Consider the following 137-residue polypeptide: Large ribosomal subunit protein uL16 (137 aa).

It belongs to the universal ribosomal protein uL16 family. As to quaternary structure, part of the 50S ribosomal subunit.

Functionally, binds 23S rRNA and is also seen to make contacts with the A and possibly P site tRNAs. The chain is Large ribosomal subunit protein uL16 from Methylococcus capsulatus (strain ATCC 33009 / NCIMB 11132 / Bath).